Reading from the N-terminus, the 183-residue chain is Peptidyl-prolyl cis-trans isomerase H (183 aa).

The PPIase cyclophilin-type domain occupies 19-182 (FFDVALGGEP…QDVVIIQCGE (164 aa)).

Belongs to the cyclophilin-type PPIase family. PPIase H subfamily.

The protein localises to the nucleus. It carries out the reaction [protein]-peptidylproline (omega=180) = [protein]-peptidylproline (omega=0). Functionally, PPIases accelerate the folding of proteins. It catalyzes the cis-trans isomerization of proline imidic peptide bonds in oligopeptides. The polypeptide is Peptidyl-prolyl cis-trans isomerase H (cyp3) (Emericella nidulans (strain FGSC A4 / ATCC 38163 / CBS 112.46 / NRRL 194 / M139) (Aspergillus nidulans)).